The primary structure comprises 207 residues: Outer-membrane lipoprotein LolB (207 aa).

The N-terminal stretch at 1-21 is a signal peptide; the sequence is MPQPDFRLIRLLPLAALVLTA. The N-palmitoyl cysteine moiety is linked to residue cysteine 22. Cysteine 22 carries S-diacylglycerol cysteine lipidation.

Belongs to the LolB family. Monomer.

The protein resides in the cell outer membrane. In terms of biological role, plays a critical role in the incorporation of lipoproteins in the outer membrane after they are released by the LolA protein. In Shigella sonnei (strain Ss046), this protein is Outer-membrane lipoprotein LolB.